The following is a 689-amino-acid chain: DNA ligase (689 aa).

Residues 40 to 44 (DSEYD), 89 to 90 (SL), and glutamate 121 contribute to the NAD(+) site. Residue lysine 123 is the N6-AMP-lysine intermediate of the active site. NAD(+) contacts are provided by arginine 144, glutamate 179, lysine 295, and lysine 319. Zn(2+)-binding residues include cysteine 413, cysteine 416, cysteine 431, and cysteine 437. The region spanning 610–689 (REQSGLTDKI…EEWLTLIKNV (80 aa)) is the BRCT domain.

It belongs to the NAD-dependent DNA ligase family. LigA subfamily. Requires Mg(2+) as cofactor. The cofactor is Mn(2+).

It carries out the reaction NAD(+) + (deoxyribonucleotide)n-3'-hydroxyl + 5'-phospho-(deoxyribonucleotide)m = (deoxyribonucleotide)n+m + AMP + beta-nicotinamide D-nucleotide.. DNA ligase that catalyzes the formation of phosphodiester linkages between 5'-phosphoryl and 3'-hydroxyl groups in double-stranded DNA using NAD as a coenzyme and as the energy source for the reaction. It is essential for DNA replication and repair of damaged DNA. The protein is DNA ligase of Rickettsia conorii (strain ATCC VR-613 / Malish 7).